The following is a 193-amino-acid chain: Fra a 1-associated protein (193 aa).

The segment at 1–27 (MGWVWKDDDEQGGHVNPSAADISPRLD) is disordered.

In terms of assembly, interacts with FRAA1E, FRAA2 and FRAA3.

The chain is Fra a 1-associated protein from Fragaria ananassa (Strawberry).